The chain runs to 37 residues: Photosystem II reaction center protein T (37 aa).

The helical transmembrane segment at 3–23 threads the bilayer; that stretch reads ALVYTFLLVGTLGIIFFAIFF.

The protein belongs to the PsbT family. In terms of assembly, PSII is composed of 1 copy each of membrane proteins PsbA, PsbB, PsbC, PsbD, PsbE, PsbF, PsbH, PsbI, PsbJ, PsbK, PsbL, PsbM, PsbT, PsbY, PsbZ, Psb30/Ycf12, at least 3 peripheral proteins of the oxygen-evolving complex and a large number of cofactors. It forms dimeric complexes.

It is found in the plastid. The protein resides in the chloroplast thylakoid membrane. Functionally, found at the monomer-monomer interface of the photosystem II (PS II) dimer, plays a role in assembly and dimerization of PSII. PSII is a light-driven water plastoquinone oxidoreductase, using light energy to abstract electrons from H(2)O, generating a proton gradient subsequently used for ATP formation. The sequence is that of Photosystem II reaction center protein T from Spirogyra maxima (Green alga).